The chain runs to 271 residues: Mannosyl-3-phosphoglycerate phosphatase (271 aa).

Aspartate 13 serves as the catalytic Nucleophile. Residues aspartate 13, aspartate 15, and aspartate 214 each contribute to the Mg(2+) site.

This sequence belongs to the HAD-like hydrolase superfamily. MPGP family. It depends on Mg(2+) as a cofactor.

Its subcellular location is the cytoplasm. It catalyses the reaction 2-O-(alpha-D-mannosyl)-3-phosphoglycerate + H2O = (2R)-2-O-(alpha-D-mannosyl)-glycerate + phosphate. The protein is Mannosyl-3-phosphoglycerate phosphatase of Escherichia coli O127:H6 (strain E2348/69 / EPEC).